Reading from the N-terminus, the 279-residue chain is Protein gustavus (279 aa).

The region spanning 36-233 is the B30.2/SPRY domain; sequence PARIDILLDM…ITMRYIGGLD (198 aa). An SOCS box domain is found at 234-279; sequence PEPLPLMDLCRRTIRQKIGRTNLEEHIQQLQLPLSMKTYLLYKNRR. Positions 236–279 are involved in binding to the Elongin BC complex; sequence PLPLMDLCRRTIRQKIGRTNLEEHIQQLQLPLSMKTYLLYKNRR.

The protein belongs to the SPSB family. As to quaternary structure, interacts (via B30.2/SPRY domain) with vas; this interaction may be necessary for the transport of vas to the posterior pole of the oocyte. Interacts with Cul-5. May associate with the Elongin BC complex composed of Elongin-B and Elongin-C. Expressed in ovaries, primarily in nurse cells and oocytes (at protein level).

It localises to the cytoplasm. The protein localises to the nucleus. Involved in the localization of vas to the posterior pole of the oocyte. Required maternally in the germ line for efficient primordial germ cell formation. The chain is Protein gustavus (gus) from Drosophila melanogaster (Fruit fly).